Here is a 427-residue protein sequence, read N- to C-terminus: NAD kinase 2, mitochondrial (427 aa).

A mitochondrion-targeting transit peptide spans methionine 1–alanine 33.

This sequence belongs to the NAD kinase family. Homodimer.

Its subcellular location is the mitochondrion. The catalysed reaction is NAD(+) + ATP = ADP + NADP(+) + H(+). Its function is as follows. Mitochondrial NAD(+) kinase that phosphorylates NAD(+) to yield NADP(+). Can use both ATP or inorganic polyphosphate as the phosphoryl donor. This chain is NAD kinase 2, mitochondrial (nadk2), found in Xenopus tropicalis (Western clawed frog).